We begin with the raw amino-acid sequence, 220 residues long: MRNSLTMVGTFWAFLSLVTAVASSTSYFLPYWLFGSQLGKPVSFSTFRRCNYPVRGDGHNLIMVEECGRYASFTAIPSLAWQMCTVVTGAGCALLLLVALAAVLGCCMEELISRMMGRCMGAAQFVGGLLISAGCALYPLGWNSPEVMQTCGNVSNQFQLGTCRLGWAYYCAGGGAAAAMLICTWLSCFAGRNPKPVMLVENIMRNTNSYALELDHCLKP.

The signal sequence occupies residues 1-20; the sequence is MRNSLTMVGTFWAFLSLVTA. Helical transmembrane passes span 86–106 and 122–142; these read VVTG…VLGC and AAQF…PLGW. A glycan (N-linked (GlcNAc...) asparagine) is linked at Asn153. A helical transmembrane segment spans residues 165 to 185; sequence LGWAYYCAGGGAAAAMLICTW.

This sequence belongs to the LHFP family. In terms of tissue distribution, widely expressed. Strongly expressed in vagina and ovary. Weakly expressed in spleen, kidney, thymus, testis, brain, lung, intestine and uterus.

It is found in the membrane. This Mus musculus (Mouse) protein is LHFPL tetraspan subfamily member 1 protein.